The sequence spans 182 residues: Peptidoglycan-recognition protein SB2 (182 aa).

The first 17 residues, 1–17, serve as a signal peptide directing secretion; sequence MKLQLALVLCGLTLALG. The 126-residue stretch at 40-165 folds into the N-acetylmuramoyl-L-alanine amidase domain; that stretch reads PVRLIIIHHT…CQTKATACPG (126 aa). Histidine 47 contacts Zn(2+). Cysteines 54 and 60 form a disulfide. Asparagine 149 carries an N-linked (GlcNAc...) asparagine glycan. Zn(2+) is bound by residues histidine 155 and cysteine 163.

This sequence belongs to the N-acetylmuramoyl-L-alanine amidase 2 family. Zn(2+) serves as cofactor.

The protein resides in the secreted. The enzyme catalyses Hydrolyzes the link between N-acetylmuramoyl residues and L-amino acid residues in certain cell-wall glycopeptides.. N-acetylmuramyl-L-alanine amidase involved in innate immunity by degrading bacterial peptidoglycans (PGN). Probably plays a scavenger role by digesting biologically active PGN into biologically inactive fragments. Has no direct bacteriolytic activity. The polypeptide is Peptidoglycan-recognition protein SB2 (PGRP-SB2) (Drosophila simulans (Fruit fly)).